We begin with the raw amino-acid sequence, 114 residues long: Adapter SH3BGRL (114 aa).

Positions 13–50 (STAIKKKQQDVLGFLEANKIGFEEKDIAANEENRKWMR) are required for interaction with HER2. A required for interaction with PFN1, HER2, and ATG12 region spans residues 54–71 (PENSRPATGYPLPPQIFN). An SH3-binding motif is present at residues 61–67 (TGYPLPP).

It belongs to the SH3BGR family. As to quaternary structure, monomer. Interacts with PFN1/Profilin-1. Interacts with ERBB2. Interacts with ATG12. Interacts with BECN1. Interacts with translating ribosomes. As to expression, ubiquitous.

It localises to the cytoplasm. It is found in the cytosol. The protein localises to the cell membrane. Appears to function as an adapter protein that bridges proteins together or proteins with mRNAs. May function as a ubiquitin ligase-substrate adapter. Additionally, associates with translating cytoplasmic ribosomes and may promote the expression of specific mRNAs. In Homo sapiens (Human), this protein is Adapter SH3BGRL.